The primary structure comprises 670 residues: MGEPAGVAGTMESPFSPGLFHRLDEDWDSALFAELGYFTDTDELQLEAANETYENNFDNLDFDLDLMPWESDIWDINNQICTVKDIKAEPQPLSPASSSYSVSSPRSVDSYSSTQHVPEELDLSSSSQMSPLSLYGENSNSLSSAEPLKEDKPVTGPRNKTENGLTPKKKIQVNSKPSIQPKPLLLPAAPKTQTNSSVPAKTIIIQTVPTLMPLAKQQPIISLQPAPTKGQTVLLSQPTVVQLQAPGVLPSAQPVLAVAGGVTQLPNHVVNVVPAPSANSPVNGKLSVTKPVLQSTMRNVGSDIAVLRRQQRMIKNRESACQSRKKKKEYMLGLEARLKAALSENEQLKKENGTLKRQLDEVVSENQRLKVPSPKRRVVCVMIVLAFIILNYGPMSMLEQDSRRMNPSVSPANQRRHLLGFSAKEAQDTSDGIIQKNSYRYDHSVSNDKALMVLTEEPLLYIPPPPCQPLINTTESLRLNHELRGWVHRHEVERTKSRRMTNNQQKTRILQGALEQGSNSQLMAVQYTETTSSISRNSGSELQVYYASPRSYQDFFEAIRRRGDTFYVVSFRRDHLLLPATTHNKTTRPKMSIVLPAININENVINGQDYEVMMQIDCQVMDTRILHIKSSSVPPYLRDQQRNQTNTFFGSPPAATEATHVVSTIPESLQ.

Residues 1-150 (MGEPAGVAGT…SLSSAEPLKE (150 aa)) form a transcription activation region. The Cytoplasmic segment spans residues 1–377 (MGEPAGVAGT…RLKVPSPKRR (377 aa)). Lysine 87 participates in a covalent cross-link: Glycyl lysine isopeptide (Lys-Gly) (interchain with G-Cter in SUMO2). Residues 91-183 (QPLSPASSSY…NSKPSIQPKP (93 aa)) form a disordered region. Low complexity-rich tracts occupy residues 94–113 (SPASSSYSVSSPRSVDSYSS) and 123–134 (LSSSSQMSPLSL). A Glycyl lysine isopeptide (Lys-Gly) (interchain with G-Cter in ubiquitin) cross-link involves residue lysine 152. One can recognise a bZIP domain in the interval 306–369 (VLRRQQRMIK…DEVVSENQRL (64 aa)). A basic motif region spans residues 308–339 (RRQQRMIKNRESACQSRKKKKEYMLGLEARLK). A leucine-zipper region spans residues 348–355 (LKKENGTL). A helical; Signal-anchor for type II membrane protein transmembrane segment spans residues 378-398 (VVCVMIVLAFIILNYGPMSML). Residues 399 to 670 (EQDSRRMNPS…VVSTIPESLQ (272 aa)) are Lumenal-facing. The segment at 468–589 (QPLINTTESL…ATTHNKTTRP (122 aa)) is interaction with THBS4. 3 N-linked (GlcNAc...) asparagine glycosylation sites follow: asparagine 472, asparagine 584, and asparagine 643.

This sequence belongs to the bZIP family. ATF subfamily. As to quaternary structure, interacts with XBP1 isoform 2; the interaction occurs in a ER stress-dependent manner. Interacts with LACC1. In terms of assembly, interacts with THBS4 (via EGF-like 3; calcium-binding domain) which facilitates its processing, activation and nuclear translocation. Interacts (via lumenal domain) with THBS1. Homodimer and heterodimer with ATF6-beta. The dimer interacts with the nuclear transcription factor Y (NF-Y) trimer through direct binding to NF-Y subunit C (NF-YC). Also interacts with the transcription factors GTF2I, YY1 and SRF. During unfolded protein response, a fragment of approximately 50 kDa containing the cytoplasmic transcription factor domain is released by proteolysis. The cleavage seems to be performed sequentially by site-1 (MBTPS1, S1P) and site-2 (MBTPS2, S2P) proteases. Post-translationally, N-glycosylated; in its luminal domain. The glycosylation status may serve as a sensor for ER homeostasis, resulting in ATF6 activation to trigger the unfolded protein response (UPR). In terms of processing, ubiquitinated by RNF186 at Lys-152, which is required for pattern recognition receptor-induced unfolded protein response-associated outcomes. Ubiquitous.

The protein localises to the endoplasmic reticulum membrane. It localises to the golgi apparatus membrane. The protein resides in the nucleus. In terms of biological role, precursor of the transcription factor form (Processed cyclic AMP-dependent transcription factor ATF-6 alpha), which is embedded in the endoplasmic reticulum membrane. Endoplasmic reticulum stress promotes processing of this form, releasing the transcription factor form that translocates into the nucleus, where it activates transcription of genes involved in the unfolded protein response (UPR). Functionally, transcription factor that initiates the unfolded protein response (UPR) during endoplasmic reticulum stress by activating transcription of genes involved in the UPR. Binds DNA on the 5'-CCAC[GA]-3'half of the ER stress response element (ERSE) (5'-CCAAT-N(9)-CCAC[GA]-3') and of ERSE II (5'-ATTGG-N-CCACG-3'). Binding to ERSE requires binding of NF-Y to ERSE. Could also be involved in activation of transcription by the serum response factor. May play a role in foveal development and cone function in the retina. This is Cyclic AMP-dependent transcription factor ATF-6 alpha (ATF6) from Homo sapiens (Human).